Consider the following 347-residue polypeptide: Eukaryotic translation initiation factor 3 subunit H (347 aa).

One can recognise an MPN domain in the interval 6–149 (VCIDSSVALK…PSSTGPQGHT (144 aa)). The disordered stretch occupies residues 136-155 (SDTDPSSTGPQGHTTTTPSG). The span at 138–155 (TDPSSTGPQGHTTTTPSG) shows a compositional bias: polar residues.

The protein belongs to the eIF-3 subunit H family. Component of the eukaryotic translation initiation factor 3 (eIF-3) complex.

The protein resides in the cytoplasm. Functionally, component of the eukaryotic translation initiation factor 3 (eIF-3) complex, which is involved in protein synthesis of a specialized repertoire of mRNAs and, together with other initiation factors, stimulates binding of mRNA and methionyl-tRNAi to the 40S ribosome. The eIF-3 complex specifically targets and initiates translation of a subset of mRNAs involved in cell proliferation. This Yarrowia lipolytica (strain CLIB 122 / E 150) (Yeast) protein is Eukaryotic translation initiation factor 3 subunit H.